Reading from the N-terminus, the 176-residue chain is Ribosome maturation factor RimP (176 aa).

This sequence belongs to the RimP family.

The protein localises to the cytoplasm. Its function is as follows. Required for maturation of 30S ribosomal subunits. In Mycolicibacterium vanbaalenii (strain DSM 7251 / JCM 13017 / BCRC 16820 / KCTC 9966 / NRRL B-24157 / PYR-1) (Mycobacterium vanbaalenii), this protein is Ribosome maturation factor RimP.